Here is a 764-residue protein sequence, read N- to C-terminus: 5-methyltetrahydropteroyltriglutamate--homocysteine methyltransferase (764 aa).

5-methyltetrahydropteroyltri-L-glutamate-binding positions include Arg-16 to Lys-19 and Lys-121. Residues Ile-440 to Ser-442 and Glu-493 contribute to the L-homocysteine site. L-methionine-binding positions include Ile-440 to Ser-442 and Glu-493. Residues Arg-524 to Cys-525 and Trp-570 each bind 5-methyltetrahydropteroyltri-L-glutamate. Asp-608 serves as a coordination point for L-homocysteine. Asp-608 serves as a coordination point for L-methionine. Glu-614 lines the 5-methyltetrahydropteroyltri-L-glutamate pocket. Positions 650, 652, and 674 each coordinate Zn(2+). His-703 (proton donor) is an active-site residue. Residue Cys-735 coordinates Zn(2+).

Belongs to the vitamin-B12 independent methionine synthase family. Requires Zn(2+) as cofactor.

It carries out the reaction 5-methyltetrahydropteroyltri-L-glutamate + L-homocysteine = tetrahydropteroyltri-L-glutamate + L-methionine. It participates in amino-acid biosynthesis; L-methionine biosynthesis via de novo pathway; L-methionine from L-homocysteine (MetE route): step 1/1. Functionally, catalyzes the transfer of a methyl group from 5-methyltetrahydrofolate to homocysteine resulting in methionine formation. The sequence is that of 5-methyltetrahydropteroyltriglutamate--homocysteine methyltransferase from Burkholderia cenocepacia (strain HI2424).